Consider the following 605-residue polypeptide: UvrABC system protein C (605 aa).

The 79-residue stretch at 14–92 (QSCGVYKMIG…IKSLKPSYNI (79 aa)) folds into the GIY-YIG domain. In terms of domain architecture, UVR spans 202–237 (KEVQRQLFSTMEKCSREMNYELAAVYRDRLKFLQQI).

It belongs to the UvrC family. Interacts with UvrB in an incision complex.

It localises to the cytoplasm. Its function is as follows. The UvrABC repair system catalyzes the recognition and processing of DNA lesions. UvrC both incises the 5' and 3' sides of the lesion. The N-terminal half is responsible for the 3' incision and the C-terminal half is responsible for the 5' incision. This Wolbachia pipientis subsp. Culex pipiens (strain wPip) protein is UvrABC system protein C.